We begin with the raw amino-acid sequence, 144 residues long: Galectin a (144 aa).

A Galectin domain is found at 1–138; that stretch reads DHIDLEFDVG…DAVLRKLCVV (138 aa).

Tetramer.

In terms of biological role, lectin that binds beta-galactoside and a wide array of complex carbohydrates. The polypeptide is Galectin a (Aplysina lactuca (Marine sponge)).